The primary structure comprises 279 residues: Phosphatidylglycerol--prolipoprotein diacylglyceryl transferase (279 aa).

A run of 3 helical transmembrane segments spans residues 18-38 (LSVR…YFVA), 55-75 (IIFY…VIFQ), and 89-109 (IWHG…AGVI). Arg137 provides a ligand contact to a 1,2-diacyl-sn-glycero-3-phospho-(1'-sn-glycerol). 2 consecutive transmembrane segments (helical) span residues 203–223 (LGET…FIEG) and 235–255 (IRVA…LIVY).

This sequence belongs to the Lgt family.

The protein resides in the cell membrane. The enzyme catalyses L-cysteinyl-[prolipoprotein] + a 1,2-diacyl-sn-glycero-3-phospho-(1'-sn-glycerol) = an S-1,2-diacyl-sn-glyceryl-L-cysteinyl-[prolipoprotein] + sn-glycerol 1-phosphate + H(+). It functions in the pathway protein modification; lipoprotein biosynthesis (diacylglyceryl transfer). In terms of biological role, catalyzes the transfer of the diacylglyceryl group from phosphatidylglycerol to the sulfhydryl group of the N-terminal cysteine of a prolipoprotein, the first step in the formation of mature lipoproteins. This Staphylococcus aureus (strain MSSA476) protein is Phosphatidylglycerol--prolipoprotein diacylglyceryl transferase.